The primary structure comprises 912 residues: WD repeat-containing protein 44 (912 aa).

3 disordered regions span residues 206-352 (DIIE…ELTD), 399-426 (SNDA…LKQK), and 460-481 (RDEV…GMPY). The span at 236-258 (NRPPQPINAPPPRPPPPARPAPP) shows a compositional bias: pro residues. Basic and acidic residues predominate over residues 264-278 (GDTDFDRSSGFEYQK). The segment covering 288–311 (SPNTLTENMNRDSQPSLDLASATS) has biased composition (polar residues). The segment covering 410-422 (KPQSHQSETDGGK) has biased composition (basic and acidic residues). Over residues 469-478 (DDPSSSDDEG) the composition is skewed to acidic residues. The stretch at 511–550 (EHVGAVWTMKFSHCGRLLASAGQDNVVRIWVLKNAFDYFN) is one WD 1 repeat. The disordered stretch occupies residues 559–594 (EGRVSPSPSQESLNSSKSDTDGGVFSGTDDVDPDDK). Over residues 563 to 575 (SPSPSQESLNSSK) the composition is skewed to low complexity. WD repeat units follow at residues 608–646 (GHTA…CLCC), 648–688 (QHID…VALW), 693–732 (GQTK…YHTQ), 743–782 (RVGR…LSMK), 787–826 (VNSS…SKFT), 841–880 (AHNA…ENIP), and 882–912 (GALK…KNIS). Residues 861-882 (AETSSEKQEGDQAEPVENIPSG) are disordered.

It localises to the cytoplasm. It is found in the cytosol. Its subcellular location is the perinuclear region. The protein localises to the endosome membrane. The protein resides in the golgi apparatus. It localises to the trans-Golgi network. Its function is as follows. Downstream effector for rab11. May be involved in vesicle recycling. May also be involved in the inhibition of the intracellular ciliogenesis pathway. This chain is WD repeat-containing protein 44 (wdr44), found in Xenopus laevis (African clawed frog).